The primary structure comprises 102 residues: UPF0751 protein DSY4013 (102 aa).

The protein belongs to the UPF0751 family.

The protein is UPF0751 protein DSY4013 of Desulfitobacterium hafniense (strain Y51).